A 66-amino-acid polypeptide reads, in one-letter code: Cold shock-like protein CspD (66 aa).

The 60-residue stretch at 4 to 63 (GKVKWFNGEKGFGFIEVEGGEDVFVHFSAIQGDGFKTLEEGQEVSFEIVDGNRGPQAANV) folds into the CSD domain.

As to quaternary structure, homodimer.

The protein resides in the cytoplasm. The protein is Cold shock-like protein CspD (cspD) of Bacillus cereus.